We begin with the raw amino-acid sequence, 239 residues long: LexA repressor (239 aa).

Positions 26–46 (FDEMKEALDLASKSGIHRLIT) form a DNA-binding region, H-T-H motif. The interval 90–110 (GSLGKTPPPPARPAPVATNDD) is disordered. Catalysis depends on for autocatalytic cleavage activity residues Ser160 and Lys198.

The protein belongs to the peptidase S24 family. Homodimer.

The catalysed reaction is Hydrolysis of Ala-|-Gly bond in repressor LexA.. In terms of biological role, represses a number of genes involved in the response to DNA damage (SOS response), including recA and lexA. In the presence of single-stranded DNA, RecA interacts with LexA causing an autocatalytic cleavage which disrupts the DNA-binding part of LexA, leading to derepression of the SOS regulon and eventually DNA repair. The chain is LexA repressor from Brucella anthropi (strain ATCC 49188 / DSM 6882 / CCUG 24695 / JCM 21032 / LMG 3331 / NBRC 15819 / NCTC 12168 / Alc 37) (Ochrobactrum anthropi).